Consider the following 157-residue polypeptide: uncharacterized protein (157 aa).

The 146-residue stretch at 9 to 154 folds into the N-acetyltransferase domain; sequence LLINYKTLDE…ETNLNAVTNE (146 aa).

This is an uncharacterized protein from Bacillus cereus (strain G9842).